Here is a 1746-residue protein sequence, read N- to C-terminus: tRNA (32-2'-O)-methyltransferase regulator THADA (1746 aa).

A coiled-coil region spans residues 1252 to 1286 (EQALAEIRRIVVELKALQLRLKNTEAANTKLNTNV).

The protein belongs to the THADA family. As to quaternary structure, interacts with SERCA. In terms of tissue distribution, detected in the larval fat body, salivary glands and wing imaginal disks (at protein level).

The protein resides in the endoplasmic reticulum. Functionally, together with methyltransferase Trm7-32, methylates the 2'-O-ribose of nucleotides at position 32 of the anticodon loop of substrate tRNAs. Plays a key role in energy homeostasis by regulating the balance between energy storage and heat production. Functions by negatively regulating Ca(2+) signaling pathways that are involved in heat production and maintaining correct lipid storage in the fat body. Regulates Ca(2+) signaling pathways by reducing the activity of the calcium-transporting ATPase SERCA possibly by promoting uncoupling of SERCA ATP hydrolysis from calcium pumping. May also function in the nervous system to control feeding behavior. This chain is tRNA (32-2'-O)-methyltransferase regulator THADA, found in Drosophila melanogaster (Fruit fly).